Consider the following 501-residue polypeptide: Protein anon-37Cs (501 aa).

Its subcellular location is the cytoplasm. Has a non-vital function. This Drosophila simulans (Fruit fly) protein is Protein anon-37Cs (anon-37Cs).